Reading from the N-terminus, the 123-residue chain is Small ribosomal subunit protein uS12 (123 aa).

Residues 1–31 (MPTINQLIRKPREAQKARDKAPALQASPQKR) are disordered. A compositionally biased stretch (basic and acidic residues) spans 10 to 21 (KPREAQKARDKA). Asp89 is modified (3-methylthioaspartic acid).

It belongs to the universal ribosomal protein uS12 family. Part of the 30S ribosomal subunit. Contacts proteins S8 and S17. May interact with IF1 in the 30S initiation complex.

Functionally, with S4 and S5 plays an important role in translational accuracy. Its function is as follows. Interacts with and stabilizes bases of the 16S rRNA that are involved in tRNA selection in the A site and with the mRNA backbone. Located at the interface of the 30S and 50S subunits, it traverses the body of the 30S subunit contacting proteins on the other side and probably holding the rRNA structure together. The combined cluster of proteins S8, S12 and S17 appears to hold together the shoulder and platform of the 30S subunit. In Xanthobacter autotrophicus (strain ATCC BAA-1158 / Py2), this protein is Small ribosomal subunit protein uS12.